The sequence spans 125 residues: Fluoride-specific ion channel FluC (125 aa).

The next 4 helical transmembrane spans lie at 1–21, 32–52, 68–88, and 101–121; these read MIQA…RYFV, AFPW…GVFA, LLIT…LDAI, and IYIA…LAIM. Na(+) is bound by residues Gly-75 and Thr-78.

This sequence belongs to the fluoride channel Fluc/FEX (TC 1.A.43) family.

The protein resides in the cell inner membrane. It carries out the reaction fluoride(in) = fluoride(out). With respect to regulation, na(+) is not transported, but it plays an essential structural role and its presence is essential for fluoride channel function. Functionally, fluoride-specific ion channel. Important for reducing fluoride concentration in the cell, thus reducing its toxicity. In Rhizobium etli (strain ATCC 51251 / DSM 11541 / JCM 21823 / NBRC 15573 / CFN 42), this protein is Fluoride-specific ion channel FluC.